The sequence spans 823 residues: Transcription factor SPT20 homolog-like 1 (823 aa).

5 disordered regions span residues 246 to 273 (SVKP…KEER), 369 to 524 (PRKK…AAQP), 560 to 601 (GSSF…AVQA), 631 to 669 (VLTG…LGLS), and 720 to 757 (LRQQ…PQHI). Residues 423–440 (SHSSSGPASVSQLSSWKT) show a composition bias toward polar residues. Low complexity-rich tracts occupy residues 469–509 (SSSG…QKPS), 568–582 (APGS…ISGS), and 636–650 (QQQS…QLQQ).

It belongs to the SPT20 family.

This chain is Transcription factor SPT20 homolog-like 1 (SUPT20HL1), found in Homo sapiens (Human).